The following is a 1902-amino-acid chain: Plexin-B3 (1902 aa).

Residues 1–34 (MLTDFLQAPVMAPWSPFSLHLLLLFLLLLPLTRA) form the signal peptide. The Sema domain maps to 35 to 461 (HRFSVPNASF…TAQQVDRILV (427 aa)). The Extracellular portion of the chain corresponds to 35-1245 (HRFSVPNASF…MISTFPVEAQ (1211 aa)). Residue Asn41 is glycosylated (N-linked (GlcNAc...) asparagine). Cystine bridges form between Cys88–Cys97 and Cys122–Cys130. An N-linked (GlcNAc...) asparagine glycan is attached at Asn221. Disulfide bonds link Cys257–Cys360, Cys273–Cys305, and Cys323–Cys347. The segment at 353–372 (DSPESYPCGDEHTPSPIAGR) is disordered. N-linked (GlcNAc...) asparagine glycans are attached at residues Asn416 and Asn469. Residues 463–515 (ACPQFPNCTTCLQARDPLCGWCILQGRCTRRAECGRAVQPNQWLWSYEDNHCL) form the PSI 1 domain. Disulfide bonds link Cys464/Cys481, Cys470/Cys514, Cys473/Cys490, Cys484/Cys496, and Cys551/Cys569. PSI domains are found at residues 609–671 (DCSA…EACP) and 776–822 (DCAM…QLCP). N-linked (GlcNAc...) asparagine glycans are attached at residues Asn791, Asn889, Asn946, Asn1090, and Asn1207. IPT/TIG domains lie at 824–913 (PSID…HFTY), 915–1001 (DPVL…FRYT), and 1003–1134 (NPQL…FLYQ). The chain crosses the membrane as a helical span at residues 1246–1266 (VGLGMGAAMLIAAVLLLTLMY). Residues 1267–1902 (RHKSKQALRD…ALVEYKVTDL (636 aa)) are Cytoplasmic-facing.

This sequence belongs to the plexin family. Binds MET and MST1R. Interacts with RIT2/RIN. Interacts (via cytoplasmic domain) with FSCN1 and RAC1. May form homodimers (via Sema domain). Interacts (via cytoplasmic domain) with ARHGDIA. In terms of tissue distribution, expressed in glioma cells (at protein level). Expressed in glioma cells and oligodendrocyte precursor cells.

The protein resides in the cell membrane. Functionally, receptor for SEMA5A that plays a role in axon guidance, invasive growth and cell migration. Stimulates neurite outgrowth and mediates Ca(2+)/Mg(2+)-dependent cell aggregation. In glioma cells, SEMA5A stimulation of PLXNB3 results in the disassembly of F-actin stress fibers, disruption of focal adhesions and cellular collapse as well as inhibition of cell migration and invasion through ARHGDIA-mediated inactivation of RAC1. This is Plexin-B3 (Plxnb3) from Rattus norvegicus (Rat).